The following is a 544-amino-acid chain: Serine/threonine-protein kinase PAK 1 (544 aa).

Residues 1-79 (MSNNGLDVQD…KERPEISLPS (79 aa)) form a disordered region. Position 2 is an N-acetylserine (Ser2). Ser21 is subject to Phosphoserine; by PKB and autocatalysis. The residue at position 57 (Ser57) is a Phosphoserine; by autocatalysis. Over residues 68-79 (KEKERPEISLPS) the composition is skewed to basic and acidic residues. The interval 70–140 (KERPEISLPS…YNSKKTSNSQ (71 aa)) is autoregulatory region. Positions 75 to 88 (ISLPSDFEHTIHVG) constitute a CRIB domain. The tract at residues 75-105 (ISLPSDFEHTIHVGFDAVTGEFTGMPEQWAR) is GTPase-binding. The residue at position 84 (Thr84) is a Phosphothreonine; by OXSR1. Ser115 is subject to Phosphoserine. Residues Tyr131 and Tyr142 each carry the phosphotyrosine modification. Phosphoserine; by autocatalysis occurs at positions 144 and 149. Polar residues predominate over residues 150–166 (AEDYNSSNTLNVKTVSE). Residues 150-195 (AEDYNSSNTLNVKTVSETPAVPPVSEDEDDDDDATPPPVIAPRPEH) form a disordered region. Tyr153 is modified (phosphotyrosine; by JAK2). Ser174 is modified (phosphoserine). A compositionally biased stretch (acidic residues) spans 174-183 (SEDEDDDDDA). At Thr184 the chain carries Phosphothreonine. At Ser198 the chain carries Phosphoserine; by autocatalysis. Position 200 is a phosphotyrosine; by JAK2 (Tyr200). A Phosphoserine; by autocatalysis modification is found at Ser203. The segment at 209–250 (PVTPTRDVATSPISPTENNTTPPDALTRNTEKQKKKPKMSDE) is disordered. Residues Thr211 and Thr218 each carry the phosphothreonine modification. Phosphoserine is present on residues Ser219 and Ser222. The span at 219 to 230 (SPISPTENNTTP) shows a compositional bias: polar residues. Phosphothreonine is present on residues Thr224, Thr228, and Thr229. The Protein kinase domain maps to 269 to 520 (YTRFEKIGQG…AKELLQHQFL (252 aa)). An ATP-binding site is contributed by 275–283 (IGQGASGTV). Tyr284 carries the post-translational modification Phosphotyrosine; by JAK2. Lys298 is a binding site for ATP. The active-site Proton acceptor is Asp388. Thr422 is subject to Phosphothreonine; by autocatalysis, BRSK2 and PDPK1.

Belongs to the protein kinase superfamily. STE Ser/Thr protein kinase family. STE20 subfamily. As to quaternary structure, homodimer in its autoinhibited state. Active as monomer. Interacts with GIT1. Component of cytoplasmic complexes, which also contains PXN, ARHGEF7 and GIT1. Interacts with NISCH. Interacts with DVL1; mediates the formation of a DVL1, MUSK and PAK1 ternary complex involved in AChR clustering. Binds to the caspase-cleaved p110 isoform of CDC2L1 and CDC2L2, p110C, but not the full-length proteins. Interacts with ARHGEF7. Interacts with SCRIB. Interacts with PDPK1. Interacts (via kinase domain) with RAF1. Interacts with NCK1 and NCK2. Interacts with TBCB. Interacts with BRSK2. Interacts tightly with GTP-bound but not GDP-bound CDC42/P21 and RAC1. Interacts with SNAI1. Interacts with CIB1 (via N-terminal region); the interaction is direct, promotes PAK1 activity and occurs in a calcium-dependent manner. Interacts with INPP5K. Interacts with gamma-tubulin. Interacts with RHOU; the interaction promotes PAK1 activation. Mg(2+) is required as a cofactor. Autophosphorylated in trans, meaning that in a dimer, one kinase molecule phosphorylates the other one. Activated by autophosphorylation at Thr-422 in response to a conformation change, triggered by interaction with GTP-bound CDC42 or RAC1. Activated by phosphorylation at Thr-422 by PDPK1. Phosphorylated by JAK2 in response to PRL; this increases PAK1 kinase activity. Phosphorylated at Ser-21 by PKB/AKT; this reduces interaction with NCK1 and association with focal adhesion sites. Activated by phosphorylation at Thr-422 by BRSK2. Upon DNA damage, phosphorylated at Thr-211 and translocates to the nucleoplasm. Phosphorylated at tyrosine residues, which can be enhanced by NTN1. As to expression, expressed predominantly in the brain, with higher expression in neuronal groups associated with motor function, and at lower levels in the spleen.

Its subcellular location is the cytoplasm. It localises to the cell junction. The protein resides in the focal adhesion. The protein localises to the cell projection. It is found in the lamellipodium. Its subcellular location is the cell membrane. It localises to the ruffle membrane. The protein resides in the invadopodium. The protein localises to the nucleus. It is found in the nucleoplasm. Its subcellular location is the chromosome. It localises to the cytoskeleton. The protein resides in the microtubule organizing center. The protein localises to the centrosome. It catalyses the reaction L-seryl-[protein] + ATP = O-phospho-L-seryl-[protein] + ADP + H(+). The enzyme catalyses L-threonyl-[protein] + ATP = O-phospho-L-threonyl-[protein] + ADP + H(+). Phosphorylation of Thr-84 by OXSR1 inhibits activation. Activated by binding small G proteins. Binding of GTP-bound CDC42 or RAC1 to the autoregulatory region releases monomers from the autoinhibited dimer, and enables activation by phosphorylation of Thr-422. In terms of biological role, protein kinase involved in intracellular signaling pathways downstream of integrins and receptor-type kinases that plays an important role in cytoskeleton dynamics, in cell adhesion, migration, proliferation, apoptosis, mitosis, and in vesicle-mediated transport processes. Can directly phosphorylate BAD and protects cells against apoptosis. Activated by interaction with CDC42 and RAC1. Functions as a GTPase effector that links the Rho-related GTPases CDC42 and RAC1 to the JNK MAP kinase pathway. Phosphorylates and activates MAP2K1, and thereby mediates activation of downstream MAP kinases. Involved in the reorganization of the actin cytoskeleton, actin stress fibers and of focal adhesion complexes. Phosphorylates the tubulin chaperone TBCB and thereby plays a role in the regulation of microtubule biogenesis and organization of the tubulin cytoskeleton. Plays a role in the regulation of insulin secretion in response to elevated glucose levels. Part of a ternary complex that contains PAK1, DVL1 and MUSK that is important for MUSK-dependent regulation of AChR clustering during the formation of the neuromuscular junction (NMJ). Activity is inhibited in cells undergoing apoptosis, potentially due to binding of CDC2L1 and CDC2L2. Phosphorylates MYL9/MLC2. Phosphorylates RAF1 at 'Ser-338' and 'Ser-339' resulting in: activation of RAF1, stimulation of RAF1 translocation to mitochondria, phosphorylation of BAD by RAF1, and RAF1 binding to BCL2. Phosphorylates SNAI1 at 'Ser-246' promoting its transcriptional repressor activity by increasing its accumulation in the nucleus. In podocytes, promotes NR3C2 nuclear localization. Required for atypical chemokine receptor ACKR2-induced phosphorylation of LIMK1 and cofilin (CFL1) and for the up-regulation of ACKR2 from endosomal compartment to cell membrane, increasing its efficiency in chemokine uptake and degradation. In synapses, seems to mediate the regulation of F-actin cluster formation performed by SHANK3, maybe through CFL1 phosphorylation and inactivation. Plays a role in RUFY3-mediated facilitating gastric cancer cells migration and invasion. In response to DNA damage, phosphorylates MORC2 which activates its ATPase activity and facilitates chromatin remodeling. In neurons, plays a crucial role in regulating GABA(A) receptor synaptic stability and hence GABAergic inhibitory synaptic transmission through its role in F-actin stabilization. In hippocampal neurons, necessary for the formation of dendritic spines and excitatory synapses; this function is dependent on kinase activity and may be exerted by the regulation of actomyosin contractility through the phosphorylation of myosin II regulatory light chain (MLC). Along with GIT1, positively regulates microtubule nucleation during interphase. Phosphorylates FXR1, promoting its localization to stress granules and activity. Phosphorylates ILK on 'Thr-173' and 'Ser-246', promoting nuclear export of ILK. The polypeptide is Serine/threonine-protein kinase PAK 1 (Rattus norvegicus (Rat)).